A 736-amino-acid polypeptide reads, in one-letter code: Fidgetin (736 aa).

Disordered regions lie at residues 118–155 (GMTP…CGNH), 180–248 (TYSG…YSPG), 272–295 (IPGY…GSSA), and 341–438 (STRG…AEEQ). Positions 128-150 (VTASVGSSTGVASSLSEPSYSSS) are enriched in low complexity. Residues 205-214 (QPPPPPPPTL) show a composition bias toward pro residues. Low complexity predominate over residues 216–232 (PSYNTSSPNLSSYNYPP). Over residues 352–368 (DTSSLAFKPTKQSMPTD) the composition is skewed to polar residues. ATP contacts are provided by residues alanine 467 and 507 to 512 (GTGRTL).

The protein belongs to the AAA ATPase family.

The protein resides in the nucleus matrix. It localises to the cytoplasm. Its subcellular location is the cytoskeleton. The protein localises to the microtubule organizing center. It is found in the centrosome. Functionally, ATP-dependent microtubule severing protein. Severs microtubules along their length and depolymerizes their ends, primarily the minus-end, suppressing microtubule growth from and attachment to centrosomes. Microtubule severing may promote rapid reorganization of cellular microtubule arrays and the release of microtubules from the centrosome following nucleation. Microtubule release from the mitotic spindle poles may allow depolymerization of the microtubule end proximal to the spindle pole, leading to poleward microtubule flux and poleward motion of chromosome. In Danio rerio (Zebrafish), this protein is Fidgetin (fign).